The following is a 333-amino-acid chain: Aspartate carbamoyltransferase catalytic subunit (333 aa).

Residues arginine 61 and threonine 62 each contribute to the carbamoyl phosphate site. Lysine 89 is an L-aspartate binding site. Arginine 111, histidine 144, and glutamine 147 together coordinate carbamoyl phosphate. Residues arginine 184 and arginine 248 each contribute to the L-aspartate site. Glycine 289 and proline 290 together coordinate carbamoyl phosphate.

The protein belongs to the aspartate/ornithine carbamoyltransferase superfamily. ATCase family. In terms of assembly, heterododecamer (2C3:3R2) of six catalytic PyrB chains organized as two trimers (C3), and six regulatory PyrI chains organized as three dimers (R2).

It carries out the reaction carbamoyl phosphate + L-aspartate = N-carbamoyl-L-aspartate + phosphate + H(+). It functions in the pathway pyrimidine metabolism; UMP biosynthesis via de novo pathway; (S)-dihydroorotate from bicarbonate: step 2/3. In terms of biological role, catalyzes the condensation of carbamoyl phosphate and aspartate to form carbamoyl aspartate and inorganic phosphate, the committed step in the de novo pyrimidine nucleotide biosynthesis pathway. The sequence is that of Aspartate carbamoyltransferase catalytic subunit from Trichormus variabilis (strain ATCC 29413 / PCC 7937) (Anabaena variabilis).